Consider the following 1059-residue polypeptide: Carbamoyl phosphate synthase large chain (1059 aa).

Positions Met1 to Glu401 are carboxyphosphate synthetic domain. The ATP site is built by Arg129, Arg169, Gly175, Gly176, Arg208, Ile210, Glu215, Gly241, Ile242, His243, Gln284, and Glu298. The ATP-grasp 1 domain occupies Lys133–Val327. The Mg(2+) site is built by Gln284, Glu298, and Asn300. Mn(2+) is bound by residues Gln284, Glu298, and Asn300. The interval Ile402–Ser546 is oligomerization domain. The interval Ile547–Tyr929 is carbamoyl phosphate synthetic domain. The ATP-grasp 2 domain maps to Glu671–Leu861. ATP-binding residues include Arg707, Ser746, Ile748, Glu752, Gly777, Val778, His779, Ser780, Gln820, and Glu832. Mg(2+) is bound by residues Gln820, Glu832, and Asn834. Mn(2+)-binding residues include Gln820, Glu832, and Asn834. The region spanning Leu930–Ile1059 is the MGS-like domain. Residues Leu930–Ile1059 are allosteric domain.

Belongs to the CarB family. Composed of two chains; the small (or glutamine) chain promotes the hydrolysis of glutamine to ammonia, which is used by the large (or ammonia) chain to synthesize carbamoyl phosphate. Tetramer of heterodimers (alpha,beta)4. The cofactor is Mg(2+). Requires Mn(2+) as cofactor.

It catalyses the reaction hydrogencarbonate + L-glutamine + 2 ATP + H2O = carbamoyl phosphate + L-glutamate + 2 ADP + phosphate + 2 H(+). The catalysed reaction is hydrogencarbonate + NH4(+) + 2 ATP = carbamoyl phosphate + 2 ADP + phosphate + 2 H(+). Its pathway is amino-acid biosynthesis; L-arginine biosynthesis; carbamoyl phosphate from bicarbonate: step 1/1. It participates in pyrimidine metabolism; UMP biosynthesis via de novo pathway; (S)-dihydroorotate from bicarbonate: step 1/3. Functionally, large subunit of the glutamine-dependent carbamoyl phosphate synthetase (CPSase). CPSase catalyzes the formation of carbamoyl phosphate from the ammonia moiety of glutamine, carbonate, and phosphate donated by ATP, constituting the first step of 2 biosynthetic pathways, one leading to arginine and/or urea and the other to pyrimidine nucleotides. The large subunit (synthetase) binds the substrates ammonia (free or transferred from glutamine from the small subunit), hydrogencarbonate and ATP and carries out an ATP-coupled ligase reaction, activating hydrogencarbonate by forming carboxy phosphate which reacts with ammonia to form carbamoyl phosphate. This Streptococcus thermophilus (strain ATCC BAA-250 / LMG 18311) protein is Carbamoyl phosphate synthase large chain.